Consider the following 301-residue polypeptide: Methionyl-tRNA formyltransferase (301 aa).

A (6S)-5,6,7,8-tetrahydrofolate-binding site is contributed by S110 to P113.

It belongs to the Fmt family.

The enzyme catalyses L-methionyl-tRNA(fMet) + (6R)-10-formyltetrahydrofolate = N-formyl-L-methionyl-tRNA(fMet) + (6S)-5,6,7,8-tetrahydrofolate + H(+). Attaches a formyl group to the free amino group of methionyl-tRNA(fMet). The formyl group appears to play a dual role in the initiator identity of N-formylmethionyl-tRNA by promoting its recognition by IF2 and preventing the misappropriation of this tRNA by the elongation apparatus. The protein is Methionyl-tRNA formyltransferase of Acidiphilium cryptum (strain JF-5).